We begin with the raw amino-acid sequence, 290 residues long: Short chain dehydrogenase andI (290 aa).

NADP(+) contacts are provided by I35, N120, R154, Y186, K190, V219, and T221. Residue Y186 is the Proton acceptor of the active site. K190 acts as the Lowers pKa of active site Tyr in catalysis.

Belongs to the short-chain dehydrogenases/reductases (SDR) family.

Its pathway is secondary metabolite biosynthesis; terpenoid biosynthesis. Functionally, short chain dehydrogenase; part of the gene cluster that mediates the biosynthesis of anditomin, a fungal meroterpenoid. The first step of the pathway is the synthesis of 3,5-dimethylorsellinic acid (DMOA) by the polyketide synthase andM. DMOA is then converted to the phthalide compound 5,7-dihydroxy-4,6-dimethylphthalide (DHDMP) by the cytochrome P450 monooxygenase andK, which is further prenylated by the prenyltransferase andD to yield farnesyl-DHDMP. Further epoxidation by the FAD-dependent monooxygenase andE leads to epoxyfarnesyl-DHDMP. The next step involves the terpene cyclase andB that converts epoxyfarnesyl-DHDMP into preandiloid A through opening of the epoxide ring followed by the cyclization of the farnesyl moiety. Preandiloid A is in turn oxidized at the C-3 hydroxyl group to yield preandiloid B by the dehydrogenase andC. The dioxygenase andA is solely responsible for the dehydrogenation of preandiloid B leading to the enone preandiloid C, as well as for the intriguing structural rearrangement to generate the bicyclo[2.2.2]octane core, transforming preandiloid C into andiconin. FAD-binding monooxygenase andJ then produces andilesin D which is reduced by dehydrogenase andI to yield andilesin A. Action of acetyltransferase andG followed by a spontaneous acetate elimination leads then to andilesin B, which is in turn substrate of the short chain dehydrogenase andH to yield andilesin C. Finally, the dioxygenase andF catalyzes the transformation of andilesin C to anditomin. The polypeptide is Short chain dehydrogenase andI (Emericella variicolor (Aspergillus stellatus)).